The sequence spans 308 residues: Cytochrome b (308 aa).

A run of 4 helical transmembrane segments spans residues 1 to 21, 45 to 66, 81 to 101, and 146 to 166; these read FGSL…LMAM, WLIR…YLHI, WNTG…GYVL, and FFAL…IHLT. Heme b-binding residues include His-51 and His-65. Positions 150 and 164 each coordinate heme b. Position 169 (His-169) interacts with a ubiquinone. The next 3 helical transmembrane spans lie at 194-214, 256-276, and 288-308; these read TKDI…AMFS, LGGV…PFLH, and LSQL…WVGS.

This sequence belongs to the cytochrome b family. In terms of assembly, the cytochrome bc1 complex contains 11 subunits: 3 respiratory subunits (MT-CYB, CYC1 and UQCRFS1), 2 core proteins (UQCRC1 and UQCRC2) and 6 low-molecular weight proteins (UQCRH/QCR6, UQCRB/QCR7, UQCRQ/QCR8, UQCR10/QCR9, UQCR11/QCR10 and a cleavage product of UQCRFS1). This cytochrome bc1 complex then forms a dimer. It depends on heme b as a cofactor.

It localises to the mitochondrion inner membrane. Its function is as follows. Component of the ubiquinol-cytochrome c reductase complex (complex III or cytochrome b-c1 complex) that is part of the mitochondrial respiratory chain. The b-c1 complex mediates electron transfer from ubiquinol to cytochrome c. Contributes to the generation of a proton gradient across the mitochondrial membrane that is then used for ATP synthesis. This is Cytochrome b (MT-CYB) from Asthenes dorbignyi (Creamy-breasted canastero).